Consider the following 272-residue polypeptide: Urease accessory protein UreD (272 aa).

This sequence belongs to the UreD family. As to quaternary structure, ureD, UreF and UreG form a complex that acts as a GTP-hydrolysis-dependent molecular chaperone, activating the urease apoprotein by helping to assemble the nickel containing metallocenter of UreC. The UreE protein probably delivers the nickel.

It localises to the cytoplasm. Required for maturation of urease via the functional incorporation of the urease nickel metallocenter. This chain is Urease accessory protein UreD, found in Opitutus terrae (strain DSM 11246 / JCM 15787 / PB90-1).